Here is a 95-residue protein sequence, read N- to C-terminus: Progonadoliberin-1 (95 aa).

The first 22 residues, 1-22, serve as a signal peptide directing secretion; it reads MAPQTFALWLLLVGTLLGQGCC. Gln23 carries the pyrrolidone carboxylic acid modification. At Gly32 the chain carries Glycine amide.

It belongs to the GnRH family.

The protein resides in the secreted. In terms of biological role, stimulates the secretion of gonadotropins. This chain is Progonadoliberin-1 (gnrh1), found in Morone saxatilis (Striped bass).